Reading from the N-terminus, the 194-residue chain is MSALRLIVGLGNPGQEHAQTRHNAGFRFVDSLIERSGARWALDSKLFGETAKVDIAGQPVWLLKPATFMNLSGKSITAALRFWKIEPEHLLVAHDELDLAPGTARLKFDGGHGGQNGLRDTIGLLGHGKFHRLRVGIGHPGHKDRVVPWVLGRAGREDDAAIGTAIDAAIDVLPLAMEGHFSEAMKRLHTSRDA.

His17 provides a ligand contact to tRNA. The active-site Proton acceptor is His22. TRNA contacts are provided by Phe68, Asn70, and Asn116.

This sequence belongs to the PTH family. As to quaternary structure, monomer.

It localises to the cytoplasm. The catalysed reaction is an N-acyl-L-alpha-aminoacyl-tRNA + H2O = an N-acyl-L-amino acid + a tRNA + H(+). Functionally, hydrolyzes ribosome-free peptidyl-tRNAs (with 1 or more amino acids incorporated), which drop off the ribosome during protein synthesis, or as a result of ribosome stalling. Catalyzes the release of premature peptidyl moieties from peptidyl-tRNA molecules trapped in stalled 50S ribosomal subunits, and thus maintains levels of free tRNAs and 50S ribosomes. The chain is Peptidyl-tRNA hydrolase from Xanthomonas oryzae pv. oryzae (strain MAFF 311018).